Reading from the N-terminus, the 436-residue chain is D-amino acid dehydrogenase (436 aa).

3 to 17 (IVVLGAGVVGVTSAY) provides a ligand contact to FAD.

Belongs to the DadA oxidoreductase family. The cofactor is FAD.

It catalyses the reaction a D-alpha-amino acid + A + H2O = a 2-oxocarboxylate + AH2 + NH4(+). Its pathway is amino-acid degradation; D-alanine degradation; NH(3) and pyruvate from D-alanine: step 1/1. Functionally, oxidative deamination of D-amino acids. The protein is D-amino acid dehydrogenase of Cereibacter sphaeroides (strain ATCC 17029 / ATH 2.4.9) (Rhodobacter sphaeroides).